The primary structure comprises 170 residues: Keratin-associated protein 9-2 (170 aa).

17 repeat units span residues 8–12, 13–17, 18–22, 37–41, 42–46, 51–55, 61–65, 66–70, 75–79, 80–84, 85–89, 90–94, 95–99, 140–144, 145–149, 150–154, and 164–168. The tract at residues 8–168 is 17 X 5 AA repeats of C-C-[RQVSGE]-[SPTQ]-[TASP]; that stretch reads CCQPTCCRTT…TCVSSCCQPS (161 aa).

Belongs to the KRTAP type 9 family. Interacts with hair keratins.

In the hair cortex, hair keratin intermediate filaments are embedded in an interfilamentous matrix, consisting of hair keratin-associated proteins (KRTAP), which are essential for the formation of a rigid and resistant hair shaft through their extensive disulfide bond cross-linking with abundant cysteine residues of hair keratins. The matrix proteins include the high-sulfur and high-glycine-tyrosine keratins. In Pan troglodytes (Chimpanzee), this protein is Keratin-associated protein 9-2 (KRTAP9-2).